We begin with the raw amino-acid sequence, 540 residues long: Beta-glucosidase 1B (540 aa).

Residues Gln-25, His-128, and Asn-174 each coordinate substrate. Glu-175 (proton donor) is an active-site residue. Tyr-316 provides a ligand contact to substrate. The Nucleophile role is filled by Glu-380. Substrate is bound by residues Trp-430 and 437–438 (EW). Low complexity predominate over residues 481–492 (PAAETKKAATPS). The segment at 481 to 524 (PAAETKKAATPSPLKPHGAISNGVSKKSSATKEPKSASRKKGRK) is disordered.

Belongs to the glycosyl hydrolase 1 family.

The enzyme catalyses Hydrolysis of terminal, non-reducing beta-D-glucosyl residues with release of beta-D-glucose.. Plays an important role in cellulose degradation. Shows hydrolytic activity against several glycosidic compounds. This chain is Beta-glucosidase 1B, found in Phanerodontia chrysosporium (White-rot fungus).